Here is a 754-residue protein sequence, read N- to C-terminus: MDGKVNNNPPRSRHRRTSSLEEVVDPFSTPDVYYGPKSDPSKLLSKNRFTRTRTFSVAEPGGGKGHSSSYTSPYFDTTVPLRRRGSEDDSYSASQGQRRFYIEDVDKTLKELLASEDTDGNYQITIEDTGPKVIRVGTVNSNGYKHVHIRGTYMLSNLLQELTLAKLFNRKQVILDEARLNENPVNRMTRLISGQFWKSLTRRIDSNNIAKIAYDTKIDTPKAKNPRIYVPYNCQDEYQQLVQWSEMDPSLQLEVNYLPKDITPEFVKSLNDKPGLLCLAMESHMDPVTGEETWVGFPYAVPGGRFNELYGWDSYFMALGLLESNKLDVARGMVEHFIFEIDHYGKILNANRSYYLCRSQPPFLTDMALQVCRKMGGDKNPVAVDLLRRAFKAAIKEYLTVWTASPRLDEKTGLSCYHPDGIGIPPETEPGHFDSILRKYAEKYNVSIPEFRDLYNSQKVHEPDLDVFFLHDRGVRESGHDTTYRFENVCAYLATIDLNSLLYKYEVDIAYVIKKYFGDNFEGLPEGHRTSNDWEKLAEVRKERIDKYLWDEETGFYYDYNVKTEKRTSYESVTTFWALWAGMSSQEQAQRMVENALPKLEEFGGLVACTARSRGELSLDRPTRQWDYPFGWAPHQILVWDGLVRYGYENHTRRLAYRWLFLMTKAFVDYNGIVVEKYDVTRGTDPHRVDAEYGNQGADFKGVATEGFGWVNSSYLLGMKYMNNFARRALGTCVTPKVFFGRLPPKEKKKYGLE.

Residues 1–10 (MDGKVNNNPP) show a composition bias toward polar residues. Disordered regions lie at residues 1–47 (MDGK…LSKN) and 54–73 (TFSVAEPGGGKGHSSSYTSP). Residues Asp117, Asp119, Asn121, Gln123, and Asp128 each coordinate Ca(2+). Residues Arg305, 312-313 (WD), Asn349, 358-360 (RSQ), Glu427, Arg476, and Gly479 contribute to the substrate site. Active-site proton donor/acceptor residues include Asp481 and Glu676.

This sequence belongs to the glycosyl hydrolase 37 family. It depends on Ca(2+) as a cofactor.

The protein resides in the cytoplasm. It carries out the reaction alpha,alpha-trehalose + H2O = alpha-D-glucose + beta-D-glucose. It functions in the pathway carbohydrate degradation. Hydrolyzes intracellular trehalose to glucose. The disaccharide trehalose serves as a storage molecule for energy and carbohydrates that is mobilized during nutrient stress. The sequence is that of Cytosolic neutral trehalase from Kluyveromyces lactis (strain ATCC 8585 / CBS 2359 / DSM 70799 / NBRC 1267 / NRRL Y-1140 / WM37) (Yeast).